The following is a 482-amino-acid chain: MKLKKIIGDVKYELICGDLNVEIDNLNYDSRKVNEKGLFFCIEGYTSDGHDFIDKAVEKGADVIVCTKVPKKLPNCTVVKVEDGRKAMAVMGANFYDNPSHKLKLIGITGTNGKTTSTYMMKSMLESSGYKVGLIGTIANYIGDKKIESHRTTPESLELQKLFSDMVHDKIDYCVMEVSSHSLYLDRVYGIVFEEGIFTNLTQDHLDFHKTFENYYKAKMILFKNSKRSIINIDDKYGERVFKDAGNDKITYGLTEKADLKAENLKMTSRGTEFDLCYRGLREHVKINIPGKYNVYNALGSVAACLNEGISIEKVKDGLNKLSSVPGRCEIVTHNTNLDFDVVLDYAHTPDGLEKVLKASREFTKGRLISVFGCGGDRDKTKRPIMGEIGSKLSDIAVITSDNPRSENPEEIIKDIVQGIKTDNYVIVENRKEAIKKAMLMAKKDDVIVLAGKGHENYQILGDKTIHFDEKEIVSEFIKELF.

Ser30 lines the UDP-N-acetyl-alpha-D-muramoyl-L-alanyl-D-glutamate pocket. Residue 110–116 (GTNGKTT) coordinates ATP. UDP-N-acetyl-alpha-D-muramoyl-L-alanyl-D-glutamate is bound by residues 152 to 153 (TT), Ser179, and Arg187. Residue Lys219 is modified to N6-carboxylysine. Meso-2,6-diaminopimelate-binding positions include Arg378, 402-405 (DNPR), Gly452, and Glu456. Residues 402–405 (DNPR) carry the Meso-diaminopimelate recognition motif motif.

It belongs to the MurCDEF family. MurE subfamily. Mg(2+) is required as a cofactor. Carboxylation is probably crucial for Mg(2+) binding and, consequently, for the gamma-phosphate positioning of ATP.

It localises to the cytoplasm. The catalysed reaction is UDP-N-acetyl-alpha-D-muramoyl-L-alanyl-D-glutamate + meso-2,6-diaminopimelate + ATP = UDP-N-acetyl-alpha-D-muramoyl-L-alanyl-gamma-D-glutamyl-meso-2,6-diaminopimelate + ADP + phosphate + H(+). It participates in cell wall biogenesis; peptidoglycan biosynthesis. In terms of biological role, catalyzes the addition of meso-diaminopimelic acid to the nucleotide precursor UDP-N-acetylmuramoyl-L-alanyl-D-glutamate (UMAG) in the biosynthesis of bacterial cell-wall peptidoglycan. The protein is UDP-N-acetylmuramoyl-L-alanyl-D-glutamate--2,6-diaminopimelate ligase 1 of Clostridium acetobutylicum (strain ATCC 824 / DSM 792 / JCM 1419 / IAM 19013 / LMG 5710 / NBRC 13948 / NRRL B-527 / VKM B-1787 / 2291 / W).